The sequence spans 415 residues: Heterogeneous nuclear ribonucleoprotein F (415 aa).

Residue Met-1 is modified to N-acetylmethionine. Met-2 is subject to N-acetylmethionine; in Heterogeneous nuclear ribonucleoprotein F, N-terminally processed. Residues 13–85 (VKLRGLPWSC…ESMGHRYIEV (73 aa)) form the RRM 1 domain. Lys-72 is covalently cross-linked (Glycyl lysine isopeptide (Lys-Gly) (interchain with G-Cter in SUMO)). Residues 81 to 86 (RYIEVF) form an interaction with RNA region. Lys-87 is covalently cross-linked (Glycyl lysine isopeptide (Lys-Gly) (interchain with G-Cter in SUMO2)). Ser-104, Ser-107, and Ser-161 each carry phosphoserine. One can recognise an RRM 2 domain in the interval 111 to 188 (GFVRLRGLPF…RYIEVFKSSQ (78 aa)). Lys-167 participates in a covalent cross-link: Glycyl lysine isopeptide (Lys-Gly) (interchain with G-Cter in SUMO2). Residues 179-184 (RYIEVF) form an interaction with RNA region. Residue Lys-185 forms a Glycyl lysine isopeptide (Lys-Gly) (interchain with G-Cter in SUMO2) linkage. 3 positions are modified to phosphoserine: Ser-187, Ser-193, and Ser-195. Lys-200 bears the N6-acetyllysine; alternate mark. A Glycyl lysine isopeptide (Lys-Gly) (interchain with G-Cter in SUMO2); alternate cross-link involves residue Lys-200. Thr-215 is modified (phosphothreonine). Lys-224 is subject to N6-acetyllysine; alternate. Residue Lys-224 forms a Glycyl lysine isopeptide (Lys-Gly) (interchain with G-Cter in SUMO2); alternate linkage. At Ser-265 the chain carries Phosphoserine. The 78-residue stretch at 289–366 (HCVHMRGLPY…IELFLNSTTG (78 aa)) folds into the RRM 3 domain. Residues 355 to 360 (RYIELF) form an interaction with RNA region.

As to quaternary structure, identified in the spliceosome C complex. Interacts with AGO1, AGO2, TBP and TXNL4/DIM1. Post-translationally, sumoylated.

It is found in the nucleus. The protein localises to the nucleoplasm. In terms of biological role, component of the heterogeneous nuclear ribonucleoprotein (hnRNP) complexes which provide the substrate for the processing events that pre-mRNAs undergo before becoming functional, translatable mRNAs in the cytoplasm. Plays a role in the regulation of alternative splicing events. Binds G-rich sequences in pre-mRNAs and keeps target RNA in an unfolded state. The polypeptide is Heterogeneous nuclear ribonucleoprotein F (HNRNPF) (Macaca fascicularis (Crab-eating macaque)).